The chain runs to 194 residues: dTTP/UTP pyrophosphatase (194 aa).

Aspartate 73 (proton acceptor) is an active-site residue.

Belongs to the Maf family. YhdE subfamily. A divalent metal cation is required as a cofactor.

The protein localises to the cytoplasm. It catalyses the reaction dTTP + H2O = dTMP + diphosphate + H(+). The enzyme catalyses UTP + H2O = UMP + diphosphate + H(+). Nucleoside triphosphate pyrophosphatase that hydrolyzes dTTP and UTP. May have a dual role in cell division arrest and in preventing the incorporation of modified nucleotides into cellular nucleic acids. This Clostridium botulinum (strain ATCC 19397 / Type A) protein is dTTP/UTP pyrophosphatase.